The chain runs to 163 residues: 6,7-dimethyl-8-ribityllumazine synthase (163 aa).

5-amino-6-(D-ribitylamino)uracil-binding positions include Phe-27, 58–60 (ALE), and 87–89 (CVI). 92-93 (DT) serves as a coordination point for (2S)-2-hydroxy-3-oxobutyl phosphate. His-95 functions as the Proton donor in the catalytic mechanism. Asn-120 contacts 5-amino-6-(D-ribitylamino)uracil. Residue Arg-134 participates in (2S)-2-hydroxy-3-oxobutyl phosphate binding.

This sequence belongs to the DMRL synthase family.

The catalysed reaction is (2S)-2-hydroxy-3-oxobutyl phosphate + 5-amino-6-(D-ribitylamino)uracil = 6,7-dimethyl-8-(1-D-ribityl)lumazine + phosphate + 2 H2O + H(+). Its pathway is cofactor biosynthesis; riboflavin biosynthesis; riboflavin from 2-hydroxy-3-oxobutyl phosphate and 5-amino-6-(D-ribitylamino)uracil: step 1/2. Functionally, catalyzes the formation of 6,7-dimethyl-8-ribityllumazine by condensation of 5-amino-6-(D-ribitylamino)uracil with 3,4-dihydroxy-2-butanone 4-phosphate. This is the penultimate step in the biosynthesis of riboflavin. The chain is 6,7-dimethyl-8-ribityllumazine synthase from Afipia carboxidovorans (strain ATCC 49405 / DSM 1227 / KCTC 32145 / OM5) (Oligotropha carboxidovorans).